The chain runs to 336 residues: D-aspartate oxidase (336 aa).

Residues E34, K35, T41, S42, G304, V308, and S309 each coordinate FAD. Positions 334-336 match the Microbody targeting signal motif; that stretch reads SKL.

This sequence belongs to the DAMOX/DASOX family. As to quaternary structure, monomer. Requires FAD as cofactor.

The protein localises to the peroxisome matrix. It carries out the reaction D-aspartate + O2 + H2O = oxaloacetate + H2O2 + NH4(+). It catalyses the reaction D-glutamate + O2 + H2O = H2O2 + 2-oxoglutarate + NH4(+). Functionally, selectively catalyzes the oxidative deamination of acidic amino acids. Suppresses the level of D-aspartate in the brain, an amino acid that can act as an agonist for glutamate receptors. Protects the organism from the toxicity of D-amino acids. May also function in the intestine. This chain is D-aspartate oxidase, found in Octopus vulgaris (Common octopus).